The chain runs to 314 residues: Methionyl-tRNA formyltransferase (314 aa).

Residue 110 to 113 (SLLP) coordinates (6S)-5,6,7,8-tetrahydrofolate.

Belongs to the Fmt family.

It carries out the reaction L-methionyl-tRNA(fMet) + (6R)-10-formyltetrahydrofolate = N-formyl-L-methionyl-tRNA(fMet) + (6S)-5,6,7,8-tetrahydrofolate + H(+). Its function is as follows. Attaches a formyl group to the free amino group of methionyl-tRNA(fMet). The formyl group appears to play a dual role in the initiator identity of N-formylmethionyl-tRNA by promoting its recognition by IF2 and preventing the misappropriation of this tRNA by the elongation apparatus. The polypeptide is Methionyl-tRNA formyltransferase (Bacillus cytotoxicus (strain DSM 22905 / CIP 110041 / 391-98 / NVH 391-98)).